The primary structure comprises 344 residues: Pyruvate dehydrogenase E1 component subunit alpha (344 aa).

Residues His-55, Tyr-81, Arg-82, Ala-130, Ile-132, Asp-168, Gly-169, and Asn-197 each coordinate pyruvate. 8 residues coordinate thiamine diphosphate: Tyr-81, Arg-82, Ala-130, Ile-132, Asp-168, Gly-169, Asn-197, and His-266. Asp-168 contributes to the Mg(2+) binding site. Residue Asn-197 coordinates Mg(2+).

In terms of assembly, heterodimer of an alpha and a beta chain. It depends on thiamine diphosphate as a cofactor. Mg(2+) serves as cofactor.

It localises to the plastid. The protein localises to the chloroplast. The catalysed reaction is N(6)-[(R)-lipoyl]-L-lysyl-[protein] + pyruvate + H(+) = N(6)-[(R)-S(8)-acetyldihydrolipoyl]-L-lysyl-[protein] + CO2. In terms of biological role, the pyruvate dehydrogenase complex catalyzes the overall conversion of pyruvate to acetyl-CoA and CO(2). It contains multiple copies of three enzymatic components: pyruvate dehydrogenase (E1), dihydrolipoamide acetyltransferase (E2) and lipoamide dehydrogenase (E3). In Porphyra purpurea (Red seaweed), this protein is Pyruvate dehydrogenase E1 component subunit alpha (pdhA).